The following is a 296-amino-acid chain: Ribosomal RNA small subunit methyltransferase H (296 aa).

Residues 38–40, E57, F80, D103, and H110 each bind S-adenosyl-L-methionine; that span reads GAH.

Belongs to the methyltransferase superfamily. RsmH family.

The protein localises to the cytoplasm. It catalyses the reaction cytidine(1402) in 16S rRNA + S-adenosyl-L-methionine = N(4)-methylcytidine(1402) in 16S rRNA + S-adenosyl-L-homocysteine + H(+). Functionally, specifically methylates the N4 position of cytidine in position 1402 (C1402) of 16S rRNA. In Borrelia garinii subsp. bavariensis (strain ATCC BAA-2496 / DSM 23469 / PBi) (Borreliella bavariensis), this protein is Ribosomal RNA small subunit methyltransferase H.